Here is a 428-residue protein sequence, read N- to C-terminus: Serine--tRNA ligase (428 aa).

Position 235–237 (235–237 (TAE)) interacts with L-serine. Position 266–268 (266–268 (RSE)) interacts with ATP. Glu-289 contributes to the L-serine binding site. Position 353–356 (353–356 (EISS)) interacts with ATP. L-serine is bound at residue Ser-389.

Belongs to the class-II aminoacyl-tRNA synthetase family. Type-1 seryl-tRNA synthetase subfamily. As to quaternary structure, homodimer. The tRNA molecule binds across the dimer.

The protein localises to the cytoplasm. The catalysed reaction is tRNA(Ser) + L-serine + ATP = L-seryl-tRNA(Ser) + AMP + diphosphate + H(+). It carries out the reaction tRNA(Sec) + L-serine + ATP = L-seryl-tRNA(Sec) + AMP + diphosphate + H(+). It participates in aminoacyl-tRNA biosynthesis; selenocysteinyl-tRNA(Sec) biosynthesis; L-seryl-tRNA(Sec) from L-serine and tRNA(Sec): step 1/1. Functionally, catalyzes the attachment of serine to tRNA(Ser). Is also able to aminoacylate tRNA(Sec) with serine, to form the misacylated tRNA L-seryl-tRNA(Sec), which will be further converted into selenocysteinyl-tRNA(Sec). In Shewanella sediminis (strain HAW-EB3), this protein is Serine--tRNA ligase.